Reading from the N-terminus, the 178-residue chain is Interleukin-10 (178 aa).

The N-terminal stretch at 1 to 18 is a signal peptide; the sequence is MPNPVLLYCLVLLAGMGT. Intrachain disulfides connect Cys30–Cys126 and Cys80–Cys132. The N-linked (GlcNAc...) asparagine glycan is linked to Asn134.

This sequence belongs to the IL-10 family. In terms of assembly, homodimer. Interacts with IL10RA and IL10RB.

Its subcellular location is the secreted. Major immune regulatory cytokine that acts on many cells of the immune system where it has profound anti-inflammatory functions, limiting excessive tissue disruption caused by inflammation. Mechanistically, IL10 binds to its heterotetrameric receptor comprising IL10RA and IL10RB leading to JAK1 and STAT2-mediated phosphorylation of STAT3. In turn, STAT3 translocates to the nucleus where it drives expression of anti-inflammatory mediators. Targets antigen-presenting cells (APCs) such as macrophages and monocytes and inhibits their release of pro-inflammatory cytokines including granulocyte-macrophage colony-stimulating factor /GM-CSF, granulocyte colony-stimulating factor/G-CSF, IL-1 alpha, IL-1 beta, IL-6, IL-8 and TNF-alpha. Also interferes with antigen presentation by reducing the expression of MHC-class II and co-stimulatory molecules, thereby inhibiting their ability to induce T cell activation. In addition, controls the inflammatory response of macrophages by reprogramming essential metabolic pathways including mTOR signaling. The polypeptide is Interleukin-10 (IL10) (Marmota monax (Woodchuck)).